The sequence spans 307 residues: Putative lipid kinase SE_0507 (307 aa).

Positions 3-139 (QPYNHGVLFY…YDVLKVNDLY (137 aa)) constitute a DAGKc domain. ATP is bound by residues serine 44, 74 to 80 (GDGTLNE), and threonine 101. Mg(2+)-binding residues include serine 220, aspartate 223, and arginine 225. Catalysis depends on glutamate 281, which acts as the Proton acceptor.

The protein belongs to the diacylglycerol/lipid kinase family. The cofactor is Mg(2+).

May catalyze the ATP-dependent phosphorylation of lipids other than diacylglycerol (DAG). The protein is Putative lipid kinase SE_0507 of Staphylococcus epidermidis (strain ATCC 12228 / FDA PCI 1200).